The sequence spans 454 residues: Enolase (454 aa).

Residue Q167 participates in (2R)-2-phosphoglycerate binding. The active-site Proton donor is E209. D250, E312, and D339 together coordinate Mg(2+). Positions 364, 393, 394, and 415 each coordinate (2R)-2-phosphoglycerate. The active-site Proton acceptor is the K364.

Belongs to the enolase family. Mg(2+) is required as a cofactor.

It localises to the cytoplasm. The protein resides in the secreted. Its subcellular location is the cell surface. It catalyses the reaction (2R)-2-phosphoglycerate = phosphoenolpyruvate + H2O. Its pathway is carbohydrate degradation; glycolysis; pyruvate from D-glyceraldehyde 3-phosphate: step 4/5. Catalyzes the reversible conversion of 2-phosphoglycerate (2-PG) into phosphoenolpyruvate (PEP). It is essential for the degradation of carbohydrates via glycolysis. In Mycoplasmopsis agalactiae (strain NCTC 10123 / CIP 59.7 / PG2) (Mycoplasma agalactiae), this protein is Enolase.